Consider the following 234-residue polypeptide: Isoprenyl transferase (234 aa).

D13 is a catalytic residue. Position 13 (D13) interacts with Mg(2+). Residues 14-17 (GNGR), W18, R26, H30, and 58-60 (STE) each bind substrate. N61 (proton acceptor) is an active-site residue. Substrate contacts are provided by residues W62, R64, R180, and 186-188 (RLS). E199 lines the Mg(2+) pocket.

It belongs to the UPP synthase family. Homodimer. Requires Mg(2+) as cofactor.

Catalyzes the condensation of isopentenyl diphosphate (IPP) with allylic pyrophosphates generating different type of terpenoids. This Helicobacter pylori (strain ATCC 700392 / 26695) (Campylobacter pylori) protein is Isoprenyl transferase (uppS).